Here is a 365-residue protein sequence, read N- to C-terminus: 3-dehydroquinate synthase (365 aa).

Residues Gly-95–Asp-99, Thr-119–Thr-120, Lys-132, and Lys-141 contribute to the NAD(+) site. Zn(2+) contacts are provided by Glu-174, His-238, and His-255.

Belongs to the sugar phosphate cyclases superfamily. Dehydroquinate synthase family. Requires Co(2+) as cofactor. The cofactor is Zn(2+). It depends on NAD(+) as a cofactor.

It localises to the cytoplasm. The enzyme catalyses 7-phospho-2-dehydro-3-deoxy-D-arabino-heptonate = 3-dehydroquinate + phosphate. Its pathway is metabolic intermediate biosynthesis; chorismate biosynthesis; chorismate from D-erythrose 4-phosphate and phosphoenolpyruvate: step 2/7. Catalyzes the conversion of 3-deoxy-D-arabino-heptulosonate 7-phosphate (DAHP) to dehydroquinate (DHQ). This is 3-dehydroquinate synthase from Chlorobium chlorochromatii (strain CaD3).